The primary structure comprises 689 residues: Methionine--tRNA ligase (689 aa).

A 'HIGH' region motif is present at residues 15–25 (PYANGPIHLGH). The Zn(2+) site is built by Cys146, Cys149, Cys159, and Cys162. The short motif at 332-336 (KMSKS) is the 'KMSKS' region element. Lys335 provides a ligand contact to ATP. Residues 588 to 689 (DFAKIDLRIA…EGAQPGMRVK (102 aa)) enclose the tRNA-binding domain.

The protein belongs to the class-I aminoacyl-tRNA synthetase family. MetG type 1 subfamily. As to quaternary structure, homodimer. Zn(2+) serves as cofactor.

The protein localises to the cytoplasm. The catalysed reaction is tRNA(Met) + L-methionine + ATP = L-methionyl-tRNA(Met) + AMP + diphosphate. Its function is as follows. Is required not only for elongation of protein synthesis but also for the initiation of all mRNA translation through initiator tRNA(fMet) aminoacylation. In Shewanella sp. (strain W3-18-1), this protein is Methionine--tRNA ligase.